A 216-amino-acid polypeptide reads, in one-letter code: Octanoyltransferase (216 aa).

In terms of domain architecture, BPL/LPL catalytic spans 30–216 (GEAGEAVWLL…KRQFFEVFGA (187 aa)). Substrate is bound by residues 69–76 (RGGQYTYH), 149–151 (AIG), and 162–164 (GLS). The active-site Acyl-thioester intermediate is Cys-180.

It belongs to the LipB family.

The protein localises to the cytoplasm. The enzyme catalyses octanoyl-[ACP] + L-lysyl-[protein] = N(6)-octanoyl-L-lysyl-[protein] + holo-[ACP] + H(+). It functions in the pathway protein modification; protein lipoylation via endogenous pathway; protein N(6)-(lipoyl)lysine from octanoyl-[acyl-carrier-protein]: step 1/2. In terms of biological role, catalyzes the transfer of endogenously produced octanoic acid from octanoyl-acyl-carrier-protein onto the lipoyl domains of lipoate-dependent enzymes. Lipoyl-ACP can also act as a substrate although octanoyl-ACP is likely to be the physiological substrate. This Jannaschia sp. (strain CCS1) protein is Octanoyltransferase.